The primary structure comprises 87 residues: Stannin (87 aa).

The Mitochondrial intermembrane segment spans residues 1-10; that stretch reads MSIMDHSPTT. Residues 11 to 31 traverse the membrane as a helical segment; the sequence is GVVTVIVILIAIAALGALILG. At 32–87 the chain is on the cytoplasmic side; sequence CWCYLRLQRISQSEDEESIVGDGETKEPFLLVQYSAKGPCVERKAKLTPNGPEVHS. S49 carries the post-translational modification Phosphoserine.

It belongs to the stannin family. In terms of assembly, monomer.

It localises to the mitochondrion outer membrane. Functionally, plays a role in the toxic effects of organotins. Plays a role in endosomal maturation. This is Stannin (SNN) from Bos taurus (Bovine).